A 367-amino-acid polypeptide reads, in one-letter code: Glycerol dehydrogenase (367 aa).

NAD(+) contacts are provided by D37, G94, K95, T116, and S119. Glycerol is bound at residue D121. Residues S125, L127, and Y131 each contribute to the NAD(+) site. D171, H254, and H271 together coordinate Zn(2+). Residue H254 coordinates glycerol.

The protein belongs to the iron-containing alcohol dehydrogenase family. The cofactor is Zn(2+).

The enzyme catalyses glycerol + NAD(+) = dihydroxyacetone + NADH + H(+). Its pathway is polyol metabolism; glycerol fermentation; glycerone phosphate from glycerol (oxidative route): step 1/2. Functionally, catalyzes the NAD-dependent oxidation of glycerol to dihydroxyacetone (glycerone). Allows microorganisms to utilize glycerol as a source of carbon under anaerobic conditions. The chain is Glycerol dehydrogenase (gldA) from Escherichia coli O6:H1 (strain CFT073 / ATCC 700928 / UPEC).